The chain runs to 119 residues: Dihydroneopterin aldolase (119 aa).

Substrate contacts are provided by residues E21, Y53, and 72–73 (ID). Residue K99 is the Proton donor/acceptor of the active site.

The protein belongs to the DHNA family.

It catalyses the reaction 7,8-dihydroneopterin = 6-hydroxymethyl-7,8-dihydropterin + glycolaldehyde. Its pathway is cofactor biosynthesis; tetrahydrofolate biosynthesis; 2-amino-4-hydroxy-6-hydroxymethyl-7,8-dihydropteridine diphosphate from 7,8-dihydroneopterin triphosphate: step 3/4. Its function is as follows. Catalyzes the conversion of 7,8-dihydroneopterin to 6-hydroxymethyl-7,8-dihydropterin. The protein is Dihydroneopterin aldolase (folB) of Streptococcus pyogenes.